A 167-amino-acid chain; its full sequence is Interferon gamma (167 aa).

The first 23 residues, 1–23, serve as a signal peptide directing secretion; that stretch reads MSYTSYILAFQLCLILGSYGCYC. Pyrrolidone carboxylic acid is present on Gln-24. 3 N-linked (GlcNAc...) asparagine glycosylation sites follow: Asn-41, Asn-108, and Asn-117.

The protein belongs to the type II (or gamma) interferon family. Homodimer. Interacts with IFNGR1 (via extracellular domain); this interaction promotes IFNGR1 dimerization. In terms of tissue distribution, released primarily from activated T lymphocytes.

The protein localises to the secreted. Its function is as follows. Type II interferon produced by immune cells such as T-cells and NK cells that plays crucial roles in antimicrobial, antiviral, and antitumor responses by activating effector immune cells and enhancing antigen presentation. Primarily signals through the JAK-STAT pathway after interaction with its receptor IFNGR1 to affect gene regulation. Upon IFNG binding, IFNGR1 intracellular domain opens out to allow association of downstream signaling components JAK2, JAK1 and STAT1, leading to STAT1 activation, nuclear translocation and transcription of IFNG-regulated genes. Many of the induced genes are transcription factors such as IRF1 that are able to further drive regulation of a next wave of transcription. Plays a role in class I antigen presentation pathway by inducing a replacement of catalytic proteasome subunits with immunoproteasome subunits. In turn, increases the quantity, quality, and repertoire of peptides for class I MHC loading. Increases the efficiency of peptide generation also by inducing the expression of activator PA28 that associates with the proteasome and alters its proteolytic cleavage preference. Up-regulates as well MHC II complexes on the cell surface by promoting expression of several key molecules such as cathepsins B/CTSB, H/CTSH, and L/CTSL. Participates in the regulation of hematopoietic stem cells during development and under homeostatic conditions by affecting their development, quiescence, and differentiation. In Oryctolagus cuniculus (Rabbit), this protein is Interferon gamma (IFNG).